The sequence spans 161 residues: Transcription elongation factor GreA (161 aa).

A coiled-coil region spans residues 45 to 72 (NAEYHSAKEKLKLIDIQIAELNAVISKA).

Belongs to the GreA/GreB family.

In terms of biological role, necessary for efficient RNA polymerase transcription elongation past template-encoded arresting sites. The arresting sites in DNA have the property of trapping a certain fraction of elongating RNA polymerases that pass through, resulting in locked ternary complexes. Cleavage of the nascent transcript by cleavage factors such as GreA or GreB allows the resumption of elongation from the new 3'terminus. GreA releases sequences of 2 to 3 nucleotides. The protein is Transcription elongation factor GreA of Aliarcobacter butzleri (strain RM4018) (Arcobacter butzleri).